Reading from the N-terminus, the 180-residue chain is Inner membrane-spanning protein YciB (180 aa).

5 helical membrane-spanning segments follow: residues 22–42 (IFVASGALIVATLLALAFTWF), 50–70 (MTLVTAIMVLVFGTLTLAFHS), 72–92 (LFIKWKVTVLYVLFAVALLVS), 121–141 (MSWAVFFLVCGLLNIYVAFWL), and 149–169 (FKVFGLTALTLVFTLISGVYI).

This sequence belongs to the YciB family.

The protein resides in the cell inner membrane. In terms of biological role, plays a role in cell envelope biogenesis, maintenance of cell envelope integrity and membrane homeostasis. This chain is Inner membrane-spanning protein YciB, found in Yersinia enterocolitica serotype O:8 / biotype 1B (strain NCTC 13174 / 8081).